Reading from the N-terminus, the 610-residue chain is MTDSFNAKQFLSTVTSQPGVYSMYDLSGTVIYVGKAKDLKKRLASYFRAQVASRKTEALVKSIHHIDVTITHTETEALLLEHNYIKLYQPRYNVLLRDDKSYPFIFLSGDAHPRITSHRGAKHAKGDYFGPFPNGYAVKETLALLQKLFPIRQCEDSVYRNRSRPCLQYQIGRCLGPCVAGLVSDEEYQQQVEYVRLFLSGKDQQVLNQLVERMELASRALNFEDAAHARDQIQAVRRVTEKQFVSGDREDLDVIGVSFDAGMACVHVLFIRQGKVLGSRSYFPKVPVGTELAEVVQTFVGQFYLQGSQMRSLPGEILLDFTLPEKTLLAASLSEQAGRKIQIQTQPRGDRARYLKLARTNAATALVTKLSQQSTVHQRLAALAELLGIQAINRMECFDISHTMGEHTIASCVIFDGNGSVRAEYRRYNIEGITPGDDYAAMDQVLRRRYGKALEEKKIPDVVIIDGGKGQLGMAKAVFEQLEVPWDKSRVVLLGVAKGVDRKAGLETLFLQPHGEGMALPPDSPALHVIQHIRDDSHNHAITGHRNKRAKVKNTSALELIEGVGPRRRQSLLKYMGGLQPLRNASVEEIAQVPGISGALAEKIFNALKH.

The GIY-YIG domain maps to 16–94; that stretch reads SQPGVYSMYD…IKLYQPRYNV (79 aa). The 36-residue stretch at 204–239 folds into the UVR domain; it reads QQVLNQLVERMELASRALNFEDAAHARDQIQAVRRV.

It belongs to the UvrC family. In terms of assembly, interacts with UvrB in an incision complex.

Its subcellular location is the cytoplasm. Functionally, the UvrABC repair system catalyzes the recognition and processing of DNA lesions. UvrC both incises the 5' and 3' sides of the lesion. The N-terminal half is responsible for the 3' incision and the C-terminal half is responsible for the 5' incision. In Sodalis glossinidius (strain morsitans), this protein is UvrABC system protein C.